A 282-amino-acid polypeptide reads, in one-letter code: Snake venom serine protease NaSP (282 aa).

The N-terminal stretch at M1 to S18 is a signal peptide. Residues K19 to L56 constitute a propeptide that is removed on maturation. N-linked (GlcNAc...) asparagine glycans are attached at residues N41 and N45. The Peptidase S1 domain occupies I57–A280. 5 disulfides stabilise this stretch: C63–C195, C82–C98, C174–C241, C206–C220, and C231–C256. Catalysis depends on H97, which acts as the Charge relay system. Residue N135 is glycosylated (N-linked (GlcNAc...) asparagine). Residue D142 is the Charge relay system of the active site. N149 and N153 each carry an N-linked (GlcNAc...) asparagine glycan. S235 functions as the Charge relay system in the catalytic mechanism.

The protein belongs to the peptidase S1 family. Snake venom subfamily. As to quaternary structure, monomer. Expressed by the venom gland.

It is found in the secreted. Functionally, snake venom serine protease that may act in the hemostasis system of the prey. The sequence is that of Snake venom serine protease NaSP from Naja atra (Chinese cobra).